Consider the following 151-residue polypeptide: Putative phosphatidylglycerol/phosphatidylinositol transfer protein 1 (151 aa).

Residues 1 to 26 form the signal peptide; the sequence is MKHSKNQIVYITFFIIILIVVKPIES.

Belongs to the NPC2 family. As to quaternary structure, monomer.

In terms of biological role, catalyzes the intermembrane transfer of phosphatidylglycerol and phosphatidylinositol. The polypeptide is Putative phosphatidylglycerol/phosphatidylinositol transfer protein 1 (Dictyostelium discoideum (Social amoeba)).